Consider the following 390-residue polypeptide: MLGLKGCLTILIGYVIAVCALFSSRGRNPSLTDWEKLKDQKISNIDNFGLTGQHLLEFFQENLPFLSFSEEKYRHKHVSLYYDVFKEYILRRASSKKCLPVDSAIAKLNKDVNPMPVHSHNDYWRKLPLFEGLAYGASSTEADVWNIDEKILAVGHNEAYLDPVELTLDKLYTGPLLEILDEVNCQDSDADRKNGVFFNSPETSLFFYIDFKSDDNELTYKLLMEQYFKSLIDSGYLTYYDMKKDEIIWRPVTVILTGNYPTSLDILDNGNDNGYFESSQRFAFLDAPLLSLEPKYSKLSVAATVSFSQLMKHCGSDHWKVSLRGRMDSNEISCAKSIIDGAHALKLKTRIWGAPTWPANLVETISRQIIHDLGSDLLNLDNLFMASSLI.

The first 17 residues, 1-17 (MLGLKGCLTILIGYVIA), serve as a signal peptide directing secretion.

The protein belongs to the AIM6 family.

The polypeptide is Altered inheritance of mitochondria protein 6 (Saccharomyces cerevisiae (strain ATCC 204508 / S288c) (Baker's yeast)).